The chain runs to 507 residues: MASSSSDLTLDDHHHLTAVAAASGQATQKLQEFLSRLEEERLKIDAFKRELPLCMQLLNHAMEAYRQQLEAYQMGSQHSAAAAAAARAPLVLEEFIPVKNIGIDVVAADKAAAAGGNSVSSEKASWMVSAQLWNAPASASAADTAAKGPQTPKEHSEHHPLDTSPKLITALDGGGGGGGAFLPFSKDNAMGDGSAAAAAALPELALAPAEKAADAITIAAGEVDKKPYAHDNGVVARSREAQNGGKPPSTPSDGQAVPPPPQPHRKARRCWSPELHRRFVNALQILGGAQVATPKQIRELMKVDGLTNDEVKSHLQKYRLHTRRPMPSPAPPTAATPQLVVLGGIWVPPEYATQAAGPAIYGAHPATQPHYTAAVAAQEYYHHHHHHLQHHPAAAALVHHRAVAPPPPLPPQQQLAPPYSAKSSASARLGSPDSDGRGSGGGGGAAASGAGRDMSESIEEEGEGEEREDDDDDDEMAATNNAHAVDGDDDNDEINTTTTTSAGAINY.

Disordered regions lie at residues 139–172 (ASAA…TALD) and 238–268 (SREA…RKAR). The segment covering 152-161 (PKEHSEHHPL) has biased composition (basic and acidic residues). An HTH myb-type domain is found at 263–323 (PHRKARRCWS…HLQKYRLHTR (61 aa)). Positions 294–319 (PKQIRELMKVDGLTNDEVKSHLQKYR) form a DNA-binding region, H-T-H motif. Residues 402-507 (AVAPPPPLPP…TTTSAGAINY (106 aa)) are disordered. Residues 412 to 433 (QQQLAPPYSAKSSASARLGSPD) are compositionally biased toward low complexity. Positions 437 to 446 (RGSGGGGGAA) are enriched in gly residues. Residues 456 to 476 (ESIEEEGEGEEREDDDDDDEM) show a composition bias toward acidic residues.

In terms of assembly, interacts with ACA5.

Its subcellular location is the nucleus. Probable transcription factor that may play a role in regulatory networks controlling development and metabolism. The chain is Transcription factor NIGTH1 from Oryza sativa subsp. japonica (Rice).